The chain runs to 186 residues: Catechol O-methyltransferase (186 aa).

S-adenosyl-L-methionine contacts are provided by residues Val-7, Glu-29, Ser-37, Glu-55, Leu-56, 82–85 (GASQ), Ser-84, and Asp-106. Asp-106 is a Mg(2+) binding site. Residue Lys-109 participates in substrate binding. Residues Asp-134 and Asn-135 each contribute to the Mg(2+) site. Asn-135 and Glu-164 together coordinate substrate. Position 182 is a phosphoserine (Ser-182).

The protein belongs to the class I-like SAM-binding methyltransferase superfamily. Cation-dependent O-methyltransferase family. Mg(2+) is required as a cofactor.

It is found in the cytoplasm. It localises to the cell membrane. The catalysed reaction is a catechol + S-adenosyl-L-methionine = a guaiacol + S-adenosyl-L-homocysteine + H(+). The enzyme catalyses 2-hydroxyestrone + S-adenosyl-L-methionine = 2-hydroxy-3-methoxy-estrone + S-adenosyl-L-homocysteine + H(+). It catalyses the reaction 4-hydroxyestrone + S-adenosyl-L-methionine = 4-methoxyestrone + S-adenosyl-L-homocysteine + H(+). It carries out the reaction 2-hydroxyestrone + S-adenosyl-L-methionine = 2-methoxyestrone + S-adenosyl-L-homocysteine + H(+). The catalysed reaction is 4-hydroxy-17beta-estradiol + S-adenosyl-L-methionine = 4-methoxy-17beta-estradiol + S-adenosyl-L-homocysteine + H(+). The enzyme catalyses 2-hydroxy-17beta-estradiol + S-adenosyl-L-methionine = 2-hydroxy-3-methoxy-17beta-estradiol + S-adenosyl-L-homocysteine + H(+). It catalyses the reaction 2-hydroxy-17beta-estradiol + S-adenosyl-L-methionine = 2-methoxy-17beta-estradiol + S-adenosyl-L-homocysteine + H(+). Catalyzes the O-methylation, and thereby the inactivation, of catecholamine neurotransmitters and catechol hormones. Also shortens the biological half-lives of certain neuroactive drugs, like L-DOPA, alpha-methyl DOPA and isoproterenol. The sequence is that of Catechol O-methyltransferase (COMT) from Sus scrofa (Pig).